Reading from the N-terminus, the 302-residue chain is Lipooligosaccharide biosynthesis protein lex-1 (302 aa).

Repeat copies occupy residues 42–45 (SINQ), 46–49 (SINQ), 50–53 (SINQ), 54–57 (SINQ), 58–61 (SINQ), 62–65 (SINQ), and 66–69 (SINQ). Positions 42–69 (SINQSINQSINQSINQSINQSINQSINQ) are 7 X 4 AA tandem repeats of S-I-N-Q.

Belongs to the glycosyltransferase 25 family.

Involved in extracellular lipooligosaccharide (LOS) biosynthesis and virulence expression. Involved in the synthesis of the oligosaccharide moiety of the LOS molecule by adding GalNAc. The polypeptide is Lipooligosaccharide biosynthesis protein lex-1 (lex1) (Haemophilus influenzae (strain ATCC 51907 / DSM 11121 / KW20 / Rd)).